The following is a 433-amino-acid chain: 3-phosphoshikimate 1-carboxyvinyltransferase (433 aa).

3-phosphoshikimate contacts are provided by lysine 21, serine 22, and arginine 26. A phosphoenolpyruvate-binding site is contributed by lysine 21. Phosphoenolpyruvate-binding residues include glycine 92 and arginine 120. Residues serine 166, glutamine 168, aspartate 317, and lysine 344 each contribute to the 3-phosphoshikimate site. Residue glutamine 168 coordinates phosphoenolpyruvate. The active-site Proton acceptor is the aspartate 317. Residues arginine 348 and arginine 391 each contribute to the phosphoenolpyruvate site.

This sequence belongs to the EPSP synthase family. Monomer.

It is found in the cytoplasm. It carries out the reaction 3-phosphoshikimate + phosphoenolpyruvate = 5-O-(1-carboxyvinyl)-3-phosphoshikimate + phosphate. Its pathway is metabolic intermediate biosynthesis; chorismate biosynthesis; chorismate from D-erythrose 4-phosphate and phosphoenolpyruvate: step 6/7. Functionally, catalyzes the transfer of the enolpyruvyl moiety of phosphoenolpyruvate (PEP) to the 5-hydroxyl of shikimate-3-phosphate (S3P) to produce enolpyruvyl shikimate-3-phosphate and inorganic phosphate. In Caldicellulosiruptor saccharolyticus (strain ATCC 43494 / DSM 8903 / Tp8T 6331), this protein is 3-phosphoshikimate 1-carboxyvinyltransferase.